Here is a 204-residue protein sequence, read N- to C-terminus: uncharacterized protein (204 aa).

It is found in the mitochondrion. This is an uncharacterized protein from Arabidopsis thaliana (Mouse-ear cress).